Reading from the N-terminus, the 581-residue chain is Proteasome-associated ATPase (581 aa).

The tract at residues 1 to 28 (MTSSDLTQRKGLTMSDSTPDTPRSTPED) is disordered. Residues 14-24 (MSDSTPDTPRS) are compositionally biased toward polar residues. Residues 27–66 (EDAARRLAVLSAQNERLAQVLGEARGKIVELQQQIEEFAK) adopt a coiled-coil conformation. Position 248–253 (248–253 (GCGKTL)) interacts with ATP. Residues 561-581 (GSGRSAAGRTIETATSTGQYL) form a disordered region. The span at 572–581 (ETATSTGQYL) shows a compositional bias: polar residues. The segment at 580–581 (YL) is docks into pockets in the proteasome alpha-ring.

This sequence belongs to the AAA ATPase family. Homohexamer. Assembles into a hexameric ring structure that caps the 20S proteasome core. Strongly interacts with the prokaryotic ubiquitin-like protein Pup through a hydrophobic interface; the interacting region of ARC lies in its N-terminal coiled-coil domain. There is one Pup binding site per ARC hexamer ring. Upon ATP-binding, the C-terminus of ARC interacts with the alpha-rings of the proteasome core, possibly by binding to the intersubunit pockets.

It participates in protein degradation; proteasomal Pup-dependent pathway. ATPase which is responsible for recognizing, binding, unfolding and translocation of pupylated proteins into the bacterial 20S proteasome core particle. May be essential for opening the gate of the 20S proteasome via an interaction with its C-terminus, thereby allowing substrate entry and access to the site of proteolysis. Thus, the C-termini of the proteasomal ATPase may function like a 'key in a lock' to induce gate opening and therefore regulate proteolysis. The sequence is that of Proteasome-associated ATPase from Sanguibacter keddieii (strain ATCC 51767 / DSM 10542 / NCFB 3025 / ST-74).